Here is a 329-residue protein sequence, read N- to C-terminus: GTP 3',8-cyclase (329 aa).

Residues 1–229 (MNQVDYLRIS…EGYVRGNGPA (229 aa)) enclose the Radical SAM core domain. A GTP-binding site is contributed by Arg8. Residues Cys15 and Cys19 each coordinate [4Fe-4S] cluster. Tyr21 lines the S-adenosyl-L-methionine pocket. Cys22 provides a ligand contact to [4Fe-4S] cluster. Residue Arg60 participates in GTP binding. Gly64 is a binding site for S-adenosyl-L-methionine. Position 91 (Thr91) interacts with GTP. Ser115 provides a ligand contact to S-adenosyl-L-methionine. Residue Lys155 participates in GTP binding. Met189 provides a ligand contact to S-adenosyl-L-methionine. Positions 252 and 255 each coordinate [4Fe-4S] cluster. GTP is bound at residue 257-259 (RVR). Cys269 serves as a coordination point for [4Fe-4S] cluster.

The protein belongs to the radical SAM superfamily. MoaA family. As to quaternary structure, monomer and homodimer. Requires [4Fe-4S] cluster as cofactor.

It catalyses the reaction GTP + AH2 + S-adenosyl-L-methionine = (8S)-3',8-cyclo-7,8-dihydroguanosine 5'-triphosphate + 5'-deoxyadenosine + L-methionine + A + H(+). Its pathway is cofactor biosynthesis; molybdopterin biosynthesis. Its function is as follows. Catalyzes the cyclization of GTP to (8S)-3',8-cyclo-7,8-dihydroguanosine 5'-triphosphate. The protein is GTP 3',8-cyclase of Cyanothece sp. (strain PCC 7425 / ATCC 29141).